The following is a 251-amino-acid chain: Adapter protein MecA (251 aa).

The protein belongs to the MecA family. In terms of assembly, homodimer.

Enables the recognition and targeting of unfolded and aggregated proteins to the ClpC protease or to other proteins involved in proteolysis. This is Adapter protein MecA from Streptococcus agalactiae serotype III (strain NEM316).